We begin with the raw amino-acid sequence, 260 residues long: Putative serine protease 45 (260 aa).

Residues 1-234 (MTRHWPWEVS…YTKWIKKQMS (234 aa)) form the Peptidase S1 domain. A disulfide bridge links Cys19 with Cys35. The active-site Charge relay system is the His34. A glycan (N-linked (GlcNAc...) asparagine) is linked at Asn55. Asp82 (charge relay system) is an active-site residue. Disulfide bonds link Cys116–Cys192, Cys151–Cys173, and Cys182–Cys210. Residue Ser186 is the Charge relay system of the active site.

It belongs to the peptidase S1 family.

The protein is Putative serine protease 45 of Homo sapiens (Human).